Consider the following 219-residue polypeptide: Adenylate kinase (219 aa).

An ATP-binding site is contributed by 10-15; it reads GAGKGT. Residues 30–59 are NMP; that stretch reads STGDMLRAAIREGTELGLKAKSVMESGGLV. Residues T31, R36, 57–59, 85–88, and Q92 contribute to the AMP site; these read GLV and GFPR. The segment at 122 to 159 is LID; it reads GRRQHPASGRVYHIEYNPPKVEGKDDVTGEELVQRPDD. ATP is bound by residues R123 and 132–133; that span reads VY. R156 and R167 together coordinate AMP. Position 202 (R202) interacts with ATP.

The protein belongs to the adenylate kinase family. Monomer.

The protein resides in the cytoplasm. It catalyses the reaction AMP + ATP = 2 ADP. It participates in purine metabolism; AMP biosynthesis via salvage pathway; AMP from ADP: step 1/1. In terms of biological role, catalyzes the reversible transfer of the terminal phosphate group between ATP and AMP. Plays an important role in cellular energy homeostasis and in adenine nucleotide metabolism. The chain is Adenylate kinase from Acinetobacter baylyi (strain ATCC 33305 / BD413 / ADP1).